Consider the following 953-residue polypeptide: Lysosomal alpha-glucosidase (953 aa).

The N-terminal stretch at 1-27 is a signal peptide; that stretch reads MNIRKPLCSNSVVGACTLVSLTTAVIL. A propeptide spanning residues 28 to 69 is cleaved from the precursor; that stretch reads GHLMLRELMLLPQDLHESSSGLWKTYRPHHQESYEPAPLHIQ. Positions 80–131 constitute a P-type domain; that stretch reads TQCDVTPNSRFDCAPDKGITQEQCEARGCCWVPAGQVLNGPVMGQPWCFFPP. 3 disulfide bridges follow: C82–C109, C92–C108, and C103–C127. Residues N140, N233, and N390 are each glycosylated (N-linked (GlcNAc...) asparagine). D404 provides a ligand contact to substrate. N470 carries an N-linked (GlcNAc...) asparagine glycan. The active-site Nucleophile is the D518. Residue E521 is part of the active site. An intrachain disulfide couples C533 to C558. Substrate-binding residues include R600 and D616. C647 and C658 are joined by a disulfide. N652 carries an N-linked (GlcNAc...) asparagine glycan. H674 is a binding site for substrate. N-linked (GlcNAc...) asparagine glycosylation is found at N883 and N926.

Belongs to the glycosyl hydrolase 31 family.

The protein resides in the lysosome. The protein localises to the lysosome membrane. The enzyme catalyses Hydrolysis of terminal, non-reducing (1-&gt;4)-linked alpha-D-glucose residues with release of alpha-D-glucose.. Functionally, essential for the degradation of glycogen in lysosomes. Has highest activity on alpha-1,4-linked glycosidic linkages, but can also hydrolyze alpha-1,6-linked glucans. In Rattus norvegicus (Rat), this protein is Lysosomal alpha-glucosidase (Gaa).